Here is a 503-residue protein sequence, read N- to C-terminus: Sarpagan bridge enzyme 1 (503 aa).

Residues 3–23 (ISVTTSIALATIVFFLYKLAT) form a helical; Signal-anchor for type II membrane protein membrane-spanning segment. Cys442 lines the heme pocket.

It belongs to the cytochrome P450 family. Requires heme as cofactor. Highly expressed in roots. Expressed at low levels in leaves, stems and flowers.

Its subcellular location is the endoplasmic reticulum membrane. The catalysed reaction is (19E)-geissoschizine + reduced [NADPH--hemoprotein reductase] + O2 = polyneuridine aldehyde + oxidized [NADPH--hemoprotein reductase] + 2 H2O + H(+). The enzyme catalyses tetrahydroalstonine + A + reduced [NADPH--hemoprotein reductase] + O2 = alstonine + AH2 + oxidized [NADPH--hemoprotein reductase] + 2 H2O + H(+). It catalyses the reaction ajmalicine + A + reduced [NADPH--hemoprotein reductase] + O2 = serpentine + AH2 + oxidized [NADPH--hemoprotein reductase] + 2 H2O + H(+). The protein operates within alkaloid biosynthesis; ajmaline biosynthesis. Monooxygenase involved in the biosynthesis of ajmaline-type monoterpenoid indole alkaloids (MIAs) natural products, important plant-derived pharmaceuticals used in the therapy of heart disorders. Converts by cyclization the strictosidine-derived geissoschizine to the sarpagan alkaloid polyneuridine aldehyde, precursor of vomilenine, an intermediate chemical in the biosynthesis of ajmaline. Converts by aromatization the tetrahydro-beta-carboline alkaloids tetrahydroalstonine and ajmalicine to the corresponding beta-carboline alkaloids alstonine and serpentine, respectively. This Rauvolfia serpentina (Serpentine wood) protein is Sarpagan bridge enzyme 1.